Consider the following 1949-residue polypeptide: Protein GREB1 (1949 aa).

Disordered stretches follow at residues 52–77 (EGGS…GPPN), 302–334 (ILSN…GGGN), and 1085–1210 (EALE…GQRS). The segment covering 59-68 (NEEEEEEGEG) has biased composition (acidic residues). Basic and acidic residues-rich tracts occupy residues 1085 to 1095 (EALESDAEKLS) and 1110 to 1126 (TSEK…RSHD). Residues 1127-1147 (SASSSLSSKASGSALGGESSA) are compositionally biased toward low complexity. Residues 1166 to 1178 (PAEEGRAPGEKQR) show a composition bias toward basic and acidic residues. A helical membrane pass occupies residues 1868 to 1888 (DLLFSGLLLYLCDSFVGASFL).

The protein belongs to the GREB1 family. Expressed in proliferating prostatic tissue and prostate cancer.

Its subcellular location is the membrane. In terms of biological role, may play a role in estrogen-stimulated cell proliferation. Acts as a regulator of hormone-dependent cancer growth in breast and prostate cancers. The protein is Protein GREB1 (GREB1) of Homo sapiens (Human).